Reading from the N-terminus, the 492-residue chain is MDPYKYRPSSAYNTPFCTTNSGAPIWNNTAVMSVGERGPILLEDYQLIEKIATFTRERIPERVVHRRGASAKGFFEVTHDISNLTCADFLRAPGVQTPVIVRFSTVIHERGSPETLRDPRGFAVKFYTREGNFDLVGNNFPVFFVRDAMQFPDVIRAFKPNPKSHLQEPWRYLDFCSYHPESLLSFAWFYDDVGIPINYRHMEGFGVQAYSLINKSGKARLVKFHWKPTCGVKSMMEEEAIRIGGTNHSHATQDLYESIAAGNFPEWRLYIQTIDYEDQNKYDFEPLDTTITWPEDVVPLQPVGRLVLNKNIDNFFAENEMLAFSMSLVPGIHYSDDKMLQARSFAYADTQRHRLGPNYLQLPVNAPKCPHHNNHHEGFMNFMHRDEEVNYFPSRYDPCRHAEKFPMPPNVLTGKRERCVIPKENNNFKQAGDRYRSWAPDRQDRFVKRFVEALSDPRVTDEVRNIWISYWSQADRSLGQKIASRLNVRPNI.

Active-site residues include His-65 and Asn-138. Tyr-347 lines the heme pocket.

Belongs to the catalase family. In terms of assembly, homotetramer. Requires heme as cofactor. Abundant in green cotyledons, etiolated cotyledons, green hypocotyl and root, but not in young leaf.

It localises to the peroxisome. It carries out the reaction 2 H2O2 = O2 + 2 H2O. In terms of biological role, occurs in almost all aerobically respiring organisms and serves to protect cells from the toxic effects of hydrogen peroxide. The sequence is that of Catalase isozyme 3 (CAT3) from Cucurbita pepo (Vegetable marrow).